Consider the following 259-residue polypeptide: MQCTRAVARLAGGLARTAWATQHTYKHRPAILGLLEQPCRLCSSTGVVDNTNKTKPGTAEAAEGGILKRVLNKVGFTPNTKARLKVTSHLLYESVADKINYVTFFRDFNLPNTFNSWFLVTELHVWLLLMRSMAEGSETGEDGRFLRNCIVEAMWGDVNTRAKKLGAHNPSRTRQQIETLSEQFQAALIAYDEGIMSDDRVLACALWRRFFEMNCDDYAQIERLVKYVRQQASMLDSLPRDQFIVKPKVAWLELDKCKV.

It belongs to the CBP3 family. Interacts with sloth1; the interaction is probably involved in the assembly and stability of the mitochondrial ubiquinol-cytochrome c reductase complex.

The protein resides in the mitochondrion inner membrane. In terms of biological role, required for the assembly of the ubiquinol-cytochrome c reductase complex (mitochondrial respiratory chain complex III or cytochrome b-c1 complex). May be involved in cytochrome b translation and/or stability. The protein is Ubiquinol-cytochrome c reductase complex assembly factor 1 of Drosophila melanogaster (Fruit fly).